The chain runs to 536 residues: Protoporphyrinogen oxidase, chloroplastic (536 aa).

Residues 1 to 36 (MAAAAAAMATATSATAAPPLRIRDAARRTRRRGHVR) constitute a chloroplast transit peptide. FAD contacts are provided by residues 62 to 67 (GGGISG), 87 to 88 (EA), and 111 to 114 (GPNS). Residues 248–272 (TIKTIQERGKNPKPPRDPRLPTPKG) are disordered. The segment covering 252 to 266 (IQERGKNPKPPRDPR) has biased composition (basic and acidic residues). 510-512 (VAL) is a binding site for FAD.

It belongs to the protoporphyrinogen/coproporphyrinogen oxidase family. Protoporphyrinogen oxidase subfamily. The cofactor is FAD.

The protein localises to the plastid. It localises to the chloroplast. The enzyme catalyses protoporphyrinogen IX + 3 O2 = protoporphyrin IX + 3 H2O2. It participates in porphyrin-containing compound metabolism; protoporphyrin-IX biosynthesis; protoporphyrin-IX from protoporphyrinogen-IX: step 1/1. The protein operates within porphyrin-containing compound metabolism; chlorophyll biosynthesis. Catalyzes the 6-electron oxidation of protoporphyrinogen-IX to form protoporphyrin-IX. The chain is Protoporphyrinogen oxidase, chloroplastic (PPOX1) from Oryza sativa subsp. japonica (Rice).